Here is a 336-residue protein sequence, read N- to C-terminus: Probable carboxylesterase 6 (336 aa).

Residues 1–20 form a disordered region; sequence MGGTKLTHVTTTNPNNSNIH. The span at 7-19 shows a compositional bias: polar residues; it reads THVTTTNPNNSNI. The Involved in the stabilization of the negatively charged intermediate by the formation of the oxyanion hole signature appears at 96–98; sequence HGG. Catalysis depends on residues serine 176, aspartate 276, and histidine 303.

Belongs to the 'GDXG' lipolytic enzyme family. Expressed in roots, leaves, flowers and siliques.

The enzyme catalyses a carboxylic ester + H2O = an alcohol + a carboxylate + H(+). Carboxylesterase acting on esters with varying acyl chain length. This chain is Probable carboxylesterase 6 (CXE6), found in Arabidopsis thaliana (Mouse-ear cress).